The following is a 387-amino-acid chain: Phosphoglycerate kinase (387 aa).

Substrate is bound by residues 21–23 (DLN), arginine 36, and 59–62 (HLGR). At lysine 84 the chain carries N6-acetyllysine. Substrate is bound by residues arginine 113 and arginine 146. ATP contacts are provided by residues lysine 197, glutamate 314, and 340–343 (GGDT).

This sequence belongs to the phosphoglycerate kinase family. As to quaternary structure, monomer.

The protein localises to the cytoplasm. The enzyme catalyses (2R)-3-phosphoglycerate + ATP = (2R)-3-phospho-glyceroyl phosphate + ADP. It functions in the pathway carbohydrate degradation; glycolysis; pyruvate from D-glyceraldehyde 3-phosphate: step 2/5. The protein is Phosphoglycerate kinase of Escherichia coli O9:H4 (strain HS).